A 570-amino-acid polypeptide reads, in one-letter code: Sulfite reductase [NADPH] hemoprotein beta-component (570 aa).

4 residues coordinate [4Fe-4S] cluster: Cys-434, Cys-440, Cys-479, and Cys-483. A siroheme-binding site is contributed by Cys-483.

It belongs to the nitrite and sulfite reductase 4Fe-4S domain family. Alpha(8)-beta(8). The alpha component is a flavoprotein, the beta component is a hemoprotein. Siroheme serves as cofactor. Requires [4Fe-4S] cluster as cofactor.

It catalyses the reaction hydrogen sulfide + 3 NADP(+) + 3 H2O = sulfite + 3 NADPH + 4 H(+). Its pathway is sulfur metabolism; hydrogen sulfide biosynthesis; hydrogen sulfide from sulfite (NADPH route): step 1/1. Component of the sulfite reductase complex that catalyzes the 6-electron reduction of sulfite to sulfide. This is one of several activities required for the biosynthesis of L-cysteine from sulfate. This chain is Sulfite reductase [NADPH] hemoprotein beta-component, found in Escherichia coli (strain B / BL21-DE3).